A 208-amino-acid chain; its full sequence is N-(5'-phosphoribosyl)anthranilate isomerase (208 aa).

It belongs to the TrpF family.

It catalyses the reaction N-(5-phospho-beta-D-ribosyl)anthranilate = 1-(2-carboxyphenylamino)-1-deoxy-D-ribulose 5-phosphate. It functions in the pathway amino-acid biosynthesis; L-tryptophan biosynthesis; L-tryptophan from chorismate: step 3/5. The protein is N-(5'-phosphoribosyl)anthranilate isomerase of Dechloromonas aromatica (strain RCB).